Here is an 882-residue protein sequence, read N- to C-terminus: Valine--tRNA ligase (882 aa).

The 'HIGH' region signature appears at 42 to 52 (PNVTGKLHLGH). Positions 522 to 526 (KMSKS) match the 'KMSKS' region motif. An ATP-binding site is contributed by Lys-525. A coiled-coil region spans residues 849–873 (KIEIEKKKYESYCKQYKKLLESKNN).

Belongs to the class-I aminoacyl-tRNA synthetase family. ValS type 1 subfamily. In terms of assembly, monomer.

It localises to the cytoplasm. The catalysed reaction is tRNA(Val) + L-valine + ATP = L-valyl-tRNA(Val) + AMP + diphosphate. Functionally, catalyzes the attachment of valine to tRNA(Val). As ValRS can inadvertently accommodate and process structurally similar amino acids such as threonine, to avoid such errors, it has a 'posttransfer' editing activity that hydrolyzes mischarged Thr-tRNA(Val) in a tRNA-dependent manner. The sequence is that of Valine--tRNA ligase from Onion yellows phytoplasma (strain OY-M).